Reading from the N-terminus, the 111-residue chain is Histone H2A-Bbd type 1 (111 aa).

The protein belongs to the histone H2A family. The nucleosome is a histone octamer containing two molecules each of H2A, H2B, H3 and H4 assembled in one H3-H4 heterotetramer and two H2A-H2B heterodimers. Incorporated into nucleosomes during late spermatogenesis. Interacts with H2BC1/TH2B; preferentially dimerizes with H2BC1/TH2B to form nucleosomes. As to expression, highly expressed in adult testis, mainly in spermatocytes.

It is found in the nucleus. The protein localises to the chromosome. In terms of biological role, atypical histone H2A which replaces conventional H2A during late spermatogenesis and is involved in the replacement of histones to protamine in male germ cells. Core component of nucleosome: nucleosomes wrap and compact DNA into chromatin, limiting DNA accessibility to the cellular machineries which require DNA as a template. Nucleosomes containing H2AB1 only wrap 130 bp of DNA, compared to 147 bp for classical nucleosomes. In condensing spermatids, the heterodimer between H2AB1 and H2BC1/TH2B is loaded onto the nucleosomes and promotes loading of transition proteins (TNP1 and TNP2) onto the nucleosomes. Inclusion of the H2AB1-H2BC1/TH2B dimer into chromatin opens the nucleosomes, releasing the nucleosomal DNA ends and allowing the invasion of nucleosomes by transition proteins (TNP1 and TNP2). Then, transition proteins drive the recruitment and processing of protamines, which are responsible for histone eviction. This Mus musculus (Mouse) protein is Histone H2A-Bbd type 1 (H2ab1).